Here is a 283-residue protein sequence, read N- to C-terminus: Polyamine aminopropyltransferase (283 aa).

The PABS domain maps to 5-238; the sequence is STWIDEYHKG…GIWSWTFASE (234 aa). Gln-32 provides a ligand contact to S-methyl-5'-thioadenosine. Spermidine-binding residues include His-63 and Asp-87. S-methyl-5'-thioadenosine is bound by residues Glu-107 and 139 to 140; that span reads DG. Asp-158 functions as the Proton acceptor in the catalytic mechanism. 158–161 is a binding site for spermidine; the sequence is DCSD.

This sequence belongs to the spermidine/spermine synthase family. Homodimer or homotetramer.

The protein resides in the cytoplasm. The enzyme catalyses S-adenosyl 3-(methylsulfanyl)propylamine + putrescine = S-methyl-5'-thioadenosine + spermidine + H(+). The protein operates within amine and polyamine biosynthesis; spermidine biosynthesis; spermidine from putrescine: step 1/1. In terms of biological role, catalyzes the irreversible transfer of a propylamine group from the amino donor S-adenosylmethioninamine (decarboxy-AdoMet) to putrescine (1,4-diaminobutane) to yield spermidine. The sequence is that of Polyamine aminopropyltransferase from Prochlorococcus marinus (strain MIT 9312).